The sequence spans 334 residues: Desumoylating isopeptidase 1 homolog (334 aa).

The PPPDE domain occupies 30–174 (TVVRLNVYDM…FLEKCIPQEW (145 aa)). Active-site residues include His-55 and Cys-133. Polar residues predominate over residues 310–325 (SNIGKTNSTPGTTSNG). The interval 310–334 (SNIGKTNSTPGTTSNGLAKPTCSEC) is disordered.

Belongs to the DeSI family. In terms of tissue distribution, expressed in the pharynx, hypodermis, intestine, head neuron and tail neuron.

The protein localises to the cytoplasm. Its subcellular location is the nucleus. Functionally, protease which deconjugates SUMO from some substrate proteins. Has isopeptidase but not SUMO-processing activity. Collaborates with ubql-1 in the export of ubiquitinated proteins from the nucleus to the cytoplasm. This Caenorhabditis elegans protein is Desumoylating isopeptidase 1 homolog.